We begin with the raw amino-acid sequence, 106 residues long: Minor capsid protein VP2 (106 aa).

Belongs to the vesivirus VP2 protein family. Homooligomer. The portal-like structure consists in 12 copies of VP2. Interacts with capsid protein VP1.

Its subcellular location is the virion. It is found in the host cytoplasm. Minor structural protein that forms a portal-like structure at a unique three-fold axis of symmetry, following binding to the host receptor. The virion attaches to feline junctional adhesion molecule A (F11R). Once attached, the virion is endocytosed. Acidification of the endosome induces conformational change of capsid protein thereby injecting virus genomic RNA into host cytoplasm. The channel formed by VP2 may allow the delivery of the viral genome through the host endosomal membrane. This chain is Minor capsid protein VP2, found in Feline calicivirus (strain CFI/68 FIV) (FCV).